The primary structure comprises 1238 residues: Receptor-type tyrosine-protein phosphatase eta (1238 aa).

The signal sequence occupies residues 1–28; sequence MKPAARETRTPPRSPGLRWALLPLLLLL. Residues 29–876 lie on the Extracellular side of the membrane; the sequence is RQGQVLCAGA…LPQDPGVICG (848 aa). A Fibronectin type-III 1 domain is found at 39–122; the sequence is APNPIFDIEA…LNKTITTEPW (84 aa). Residues asparagine 62, asparagine 78, asparagine 85, asparagine 90, asparagine 110, asparagine 114, asparagine 145, asparagine 164, asparagine 173, asparagine 182, asparagine 198, asparagine 207, asparagine 244, asparagine 253, asparagine 267, asparagine 278, asparagine 313, asparagine 317, asparagine 333, asparagine 366, asparagine 379, asparagine 398, asparagine 403, asparagine 437, asparagine 452, asparagine 488, asparagine 506, asparagine 538, asparagine 572, asparagine 576, asparagine 662, asparagine 668, asparagine 685, asparagine 691, asparagine 725, asparagine 811, and asparagine 838 are each glycosylated (N-linked (GlcNAc...) asparagine). The 97-residue stretch at 170–266 folds into the Fibronectin type-III 2 domain; the sequence is PGTNNSFAFP…GQPRNKVFKT (97 aa). 6 Fibronectin type-III domains span residues 270–358, 359–443, 444–527, 528–621, 622–718, and 717–803; these read QVSD…SPDQ, VSDF…TDPS, AVTD…TQYT, RPSS…TEPE, PVTS…TDPP, and PPTP…SEVL. Residues 877 to 897 form a helical membrane-spanning segment; sequence AVFGCIFGALAITAVGGFIFW. Over 898 to 1238 the chain is Cytoplasmic; that stretch reads RKKRTDAKNN…MFGKTNGYIA (341 aa). The residue at position 910 (serine 910) is a Phosphoserine. In terms of domain architecture, Tyrosine-protein phosphatase spans 942–1199; it reads FAEEYEDLKL…VFLNQCVLDI (258 aa). Residues aspartate 1106, 1140 to 1146, and glutamine 1184 contribute to the substrate site; that span reads CSAGVGR. The Phosphocysteine intermediate role is filled by cysteine 1140.

The protein belongs to the protein-tyrosine phosphatase family. Receptor class 3 subfamily. In terms of assembly, monomer. Interacts with CTNNB1 (phosphorylated) and JUP (phosphorylated). Interacts with FLT3 (phosphorylated). Interacts with GAB1 and GRB2. Expressed at high levels in brain, kidney, spleen and intestine, and at lower levels in liver, lung, thymus and heart. Expressed at a high level in the myeloid cell line FDC-P2, and at a lower level in the pre-B lymphoid cell line WEHI-231 and the T hybridoma cell line HB21.7.31. Not expressed in the fibroblast cell line NIH3T3 or the erythroid cell line F5-5. Expressed in macrophages.

The protein localises to the cell membrane. The protein resides in the cell projection. It is found in the ruffle membrane. Its subcellular location is the cell junction. The catalysed reaction is O-phospho-L-tyrosyl-[protein] + H2O = L-tyrosyl-[protein] + phosphate. Tyrosine phosphatase which dephosphorylates or contributes to the dephosphorylation of CTNND1, FLT3, PDGFRB, MET, KDR, LYN, SRC, MAPK1, MAPK3, EGFR, TJP1, OCLN, PIK3R1 and PIK3R2. Plays a role in cell adhesion, migration, proliferation and differentiation. Has a role in megakaryocytes and platelet formation. Involved in vascular development. May be involved in the mechanism of contact inhibition of cell growth. Regulator of macrophage adhesion and spreading. Positively affects cell-matrix adhesion. Positive regulator of platelet activation and thrombosis. Negative regulator of cell proliferation. Negative regulator of PDGF-stimulated cell migration; through dephosphorylation of PDGFR. Positive regulator of endothelial cell survival, as well as of VEGF-induced SRC and AKT activation; through KDR dephosphorylation. Negative regulator of EGFR signaling pathway; through EGFR dephosphorylation. Enhances the barrier function of epithelial junctions during reassembly. Negatively regulates T-cell receptor (TCR) signaling. Upon T-cell TCR activation, it is up-regulated and excluded from the immunological synapses, while upon T-cell-antigen presenting cells (APC) disengagement, it is no longer excluded and can dephosphorylate PLCG1 and LAT to down-regulate prolongation of signaling. The polypeptide is Receptor-type tyrosine-protein phosphatase eta (Ptprj) (Mus musculus (Mouse)).